The primary structure comprises 172 residues: Large ribosomal subunit protein uL10 (172 aa).

Belongs to the universal ribosomal protein uL10 family. In terms of assembly, part of the ribosomal stalk of the 50S ribosomal subunit. The N-terminus interacts with L11 and the large rRNA to form the base of the stalk. The C-terminus forms an elongated spine to which L12 dimers bind in a sequential fashion forming a multimeric L10(L12)X complex.

Its function is as follows. Forms part of the ribosomal stalk, playing a central role in the interaction of the ribosome with GTP-bound translation factors. This Rhodospirillum rubrum (strain ATCC 11170 / ATH 1.1.1 / DSM 467 / LMG 4362 / NCIMB 8255 / S1) protein is Large ribosomal subunit protein uL10.